We begin with the raw amino-acid sequence, 858 residues long: ATP-dependent DNA helicase Q-like SIM (858 aa).

The UBA domain maps to 2–44 (DLSSDQLVMKIVEMGFEKLDALEAVKAVGGKSCDDAVEYILKG). Positions 177-353 (LSTWVAHKDC…LESLHLSKET (177 aa)) constitute a Helicase ATP-binding domain. Position 190 to 197 (190 to 197 (AATGSGKS)) interacts with ATP. Residues 288 to 291 (DEAH) carry the DEAH box motif. The segment at 402-450 (LAVISRESEEQTDFGSHDSENIHETDYDEDEEDQENSLAKKNSSNGKEL) is disordered. Residues 416 to 426 (GSHDSENIHET) are compositionally biased toward basic and acidic residues. Positions 427-436 (DYDEDEEDQE) are enriched in acidic residues. A compositionally biased stretch (polar residues) spans 437-448 (NSLAKKNSSNGK). Residues 491–627 (EKQKDLEGLT…QTEQAYKMLS (137 aa)) enclose the Helicase C-terminal domain. Residues 822–858 (RQRLERRERKPRRERKPRKKRTRGRSSTKLHPWRSKE) form a disordered region. Over residues 830–858 (RKPRRERKPRKKRTRGRSSTKLHPWRSKE) the composition is skewed to basic residues.

Belongs to the helicase family. RecQ subfamily. Requires Mg(2+) as cofactor. Mn(2+) is required as a cofactor. As to expression, mostly expressed in roots and seedlings, and, to a lower extent, in leaves, shoots, shoot apical mersitem, inflorescences, flowers, siliques and seeds.

The protein resides in the nucleus. The enzyme catalyses Couples ATP hydrolysis with the unwinding of duplex DNA by translocating in the 3'-5' direction.. The catalysed reaction is ATP + H2O = ADP + phosphate + H(+). In terms of biological role, plant specific, probable 3'-5' DNA helicase that may play a role in the repair of DNA. The chain is ATP-dependent DNA helicase Q-like SIM (RECQSIM) from Arabidopsis thaliana (Mouse-ear cress).